The primary structure comprises 794 residues: Phenylalanine--tRNA ligase beta subunit (794 aa).

Residues 39-148 (APAFDNVVVA…SDAPVGQAIR (110 aa)) form the tRNA-binding domain. In terms of domain architecture, B5 spans 399-474 (PVRKPVLLRT…RLYGYDNIPS (76 aa)). The Mg(2+) site is built by D452, D458, E461, and E462. The region spanning 700 to 793 (SKFPPVIRDL…FEQAFGAQLR (94 aa)) is the FDX-ACB domain.

This sequence belongs to the phenylalanyl-tRNA synthetase beta subunit family. Type 1 subfamily. In terms of assembly, tetramer of two alpha and two beta subunits. Requires Mg(2+) as cofactor.

Its subcellular location is the cytoplasm. It catalyses the reaction tRNA(Phe) + L-phenylalanine + ATP = L-phenylalanyl-tRNA(Phe) + AMP + diphosphate + H(+). The sequence is that of Phenylalanine--tRNA ligase beta subunit from Dechloromonas aromatica (strain RCB).